Here is a 682-residue protein sequence, read N- to C-terminus: Iron-phytosiderophore transporter yellow stripe 1 (682 aa).

The interval 1–36 is disordered; it reads MDLARRGGAAGADDEGEIERHEPAPEDMESDPAAAR. 15 consecutive transmembrane segments (helical) span residues 56–76, 79–99, 124–144, 167–187, 236–256, 288–308, 334–354, 396–416, 428–448, 460–480, 514–534, 549–569, 574–594, 612–632, and 640–660; these read GVVA…KIAL, GLVP…LRGW, CAVA…LLGL, GFGW…LSLI, LSFV…CGFV, LVNI…WPLI, FLCI…VFGV, FPAW…AVII, VIVA…GTGL, IALF…AGLA, VAQF…FLLF, APYG…FSVL, LALS…RDVL, FLVG…VFVW, and AVFM…IWTF.

It belongs to the YSL (TC 2.A.67.2) family. Expressed in roots of young maize seedlings. Not detected in leaves of iron-sufficient plants, but accumulates in roots and leaves of iron-deficient plants.

The protein localises to the membrane. Functionally, involved in Fe(3+) uptake. Acts as a proton-coupled symporter for phytosiderophore- and nicotianamine-chelated metals. Capable of transporting either Fe(2+)-nicotianamine or Fe(3+)-phytosiderophore. May transport iron, zinc, nickel, copper and, at a lower rate, manganese and cadmium. This is Iron-phytosiderophore transporter yellow stripe 1 (YS1) from Zea mays (Maize).